The sequence spans 187 residues: Ribosome-recycling factor (187 aa).

Belongs to the RRF family.

It localises to the cytoplasm. Responsible for the release of ribosomes from messenger RNA at the termination of protein biosynthesis. May increase the efficiency of translation by recycling ribosomes from one round of translation to another. The sequence is that of Ribosome-recycling factor from Bradyrhizobium sp. (strain BTAi1 / ATCC BAA-1182).